The sequence spans 307 residues: Histone deacetylase HDT1 (307 aa).

The span at 98–112 shows a compositional bias: acidic residues; that stretch reads EDEMDLDSEDEDEEL. Residues 98 to 280 are disordered; that stretch reads EDEMDLDSED…KSGGSVPCKP (183 aa). The segment covering 119 to 132 has biased composition (basic and acidic residues); sequence ENGKADEKKQKSQE. A compositionally biased stretch (acidic residues) spans 151-197; that stretch reads DDDSDEDETDDSDEDETDDSDEGLSSEEGDDDSSDEDDTSDDEEEDT. The span at 198-211 shows a compositional bias: basic and acidic residues; it reads PTPKKPEVGKKRPA. A compositionally biased stretch (low complexity) spans 265–277; sequence SPKSAPKSGGSVP. Residues 276–299 form a C2H2-type; degenerate zinc finger; that stretch reads VPCKPCSKSFISETALQAHSRAKM.

It belongs to the histone deacetylase HD2 family. As to quaternary structure, multimer. Isolated as a trimer composed of 3 proteins of 39, 42 and 45 kDa, possibly a homotrimer with different phosphorylation status or a heterotrimer with HDT2 and/or HDT3. The N-terminus is blocked. Post-translationally, phosphorylated. Required for enzyme activity.

Its subcellular location is the nucleus. The protein localises to the nucleolus. Its activity is regulated as follows. Inhibited by 3-(4-Aroyl-1-methyl-1H-pyrrol-2-yl)-N-hydroxy-2-propenamides. 3-(1-methyl-4-phenylacetyl-1H-pyrrol-2-yl)-N-hydroxy-2-propenamide 1b and 3-[1-methyl-4-(3-phenyl-2-propenoyl)-1H-pyrrol-2-yl]-N-hydroxy-2-propenamide 1c are very potent inhibitors. Its function is as follows. Mediates the deacetylation of lysine residues on the N-terminal part of the core histones (H2A, H2B, H3 and H4). Histone deacetylation gives a tag for epigenetic repression and plays an important role in transcriptional regulation, cell cycle progression and developmental events. Able to deacetylate all 4 core histones. This Zea mays (Maize) protein is Histone deacetylase HDT1 (HDT1).